The following is a 117-amino-acid chain: Ribosome-binding factor A (117 aa).

Belongs to the RbfA family. In terms of assembly, monomer. Binds 30S ribosomal subunits, but not 50S ribosomal subunits or 70S ribosomes.

Its subcellular location is the cytoplasm. In terms of biological role, one of several proteins that assist in the late maturation steps of the functional core of the 30S ribosomal subunit. Associates with free 30S ribosomal subunits (but not with 30S subunits that are part of 70S ribosomes or polysomes). Required for efficient processing of 16S rRNA. May interact with the 5'-terminal helix region of 16S rRNA. In Blochmanniella floridana, this protein is Ribosome-binding factor A.